We begin with the raw amino-acid sequence, 549 residues long: Chaperonin GroEL 2 (549 aa).

ATP contacts are provided by residues 29-32, Lys50, 86-90, Gly414, 477-479, and Asp493; these read TLGP, DGTTT, and NAA.

It belongs to the chaperonin (HSP60) family. Forms a cylinder of 14 subunits composed of two heptameric rings stacked back-to-back. Interacts with the co-chaperonin GroES.

Its subcellular location is the cytoplasm. It carries out the reaction ATP + H2O + a folded polypeptide = ADP + phosphate + an unfolded polypeptide.. In terms of biological role, together with its co-chaperonin GroES, plays an essential role in assisting protein folding. The GroEL-GroES system forms a nano-cage that allows encapsulation of the non-native substrate proteins and provides a physical environment optimized to promote and accelerate protein folding. The polypeptide is Chaperonin GroEL 2 (Myxococcus xanthus (strain DK1622)).